The primary structure comprises 334 residues: Fructose-1,6-bisphosphatase class 1 (334 aa).

Residues glutamate 90, aspartate 113, leucine 115, and aspartate 116 each contribute to the Mg(2+) site. Substrate-binding positions include 116–119 (DGSS), asparagine 209, tyrosine 242, and lysine 272. Glutamate 278 contacts Mg(2+).

Belongs to the FBPase class 1 family. As to quaternary structure, homotetramer. The cofactor is Mg(2+).

The protein resides in the cytoplasm. It catalyses the reaction beta-D-fructose 1,6-bisphosphate + H2O = beta-D-fructose 6-phosphate + phosphate. It functions in the pathway carbohydrate biosynthesis; gluconeogenesis. This Actinobacillus pleuropneumoniae serotype 5b (strain L20) protein is Fructose-1,6-bisphosphatase class 1.